The following is a 281-amino-acid chain: Protoheme IX farnesyltransferase (281 aa).

9 consecutive transmembrane segments (helical) span residues 13–33 (VIWL…GPLV), 38–58 (LIEL…FNMY), 85–105 (ALTF…LWLG), 107–127 (WVTL…TIML), 132–152 (WLNI…GWIM), 161–181 (ILLS…LAYY), 206–226 (IISI…QLYM), 227–247 (AKLI…IVTI), and 261–281 (MFKA…ISRI).

Belongs to the UbiA prenyltransferase family. Protoheme IX farnesyltransferase subfamily.

It localises to the cell membrane. It catalyses the reaction heme b + (2E,6E)-farnesyl diphosphate + H2O = Fe(II)-heme o + diphosphate. Its pathway is porphyrin-containing compound metabolism; heme O biosynthesis; heme O from protoheme: step 1/1. Functionally, converts heme B (protoheme IX) to heme O by substitution of the vinyl group on carbon 2 of heme B porphyrin ring with a hydroxyethyl farnesyl side group. The protein is Protoheme IX farnesyltransferase of Caldivirga maquilingensis (strain ATCC 700844 / DSM 13496 / JCM 10307 / IC-167).